The following is a 196-amino-acid chain: NADH-quinone oxidoreductase subunit C (196 aa).

It belongs to the complex I 30 kDa subunit family. In terms of assembly, NDH-1 is composed of 14 different subunits. Subunits NuoB, C, D, E, F, and G constitute the peripheral sector of the complex.

It is found in the cell inner membrane. It catalyses the reaction a quinone + NADH + 5 H(+)(in) = a quinol + NAD(+) + 4 H(+)(out). In terms of biological role, NDH-1 shuttles electrons from NADH, via FMN and iron-sulfur (Fe-S) centers, to quinones in the respiratory chain. The immediate electron acceptor for the enzyme in this species is believed to be ubiquinone. Couples the redox reaction to proton translocation (for every two electrons transferred, four hydrogen ions are translocated across the cytoplasmic membrane), and thus conserves the redox energy in a proton gradient. This chain is NADH-quinone oxidoreductase subunit C, found in Rickettsia bellii (strain RML369-C).